We begin with the raw amino-acid sequence, 219 residues long: N-(5'-phosphoribosyl)anthranilate isomerase (219 aa).

Belongs to the TrpF family.

The catalysed reaction is N-(5-phospho-beta-D-ribosyl)anthranilate = 1-(2-carboxyphenylamino)-1-deoxy-D-ribulose 5-phosphate. The protein operates within amino-acid biosynthesis; L-tryptophan biosynthesis; L-tryptophan from chorismate: step 3/5. This chain is N-(5'-phosphoribosyl)anthranilate isomerase, found in Dehalococcoides mccartyi (strain ATCC BAA-2266 / KCTC 15142 / 195) (Dehalococcoides ethenogenes (strain 195)).